A 619-amino-acid chain; its full sequence is MSRMVDTMGDLLTARRHFDRAMTIKNGQGCVAALPEFVAATEADPSMADAWLGRIACGDRDLASLKQLNAHSEWLHRETTRIGRTLAAEVQLGPSIGITVTDASQVGLALSSALTIAGEYAKADALLANRELLDSWRNYQWHQLARAFLMYVTQRWPDVLSTAAEDLPPQAIVMPAVTASICALAAHAAAHLGQGRVALDWLDRVDVIGHSRSSERFGADVLTAAIGPADIPLLVADLAYVRGMVYRQLHEEDKAQIWLSKATINGVLTDAAKEALADPNLRLIVTDERTIASRSDRWDASTAKSRDQLDDDNAAQRRGELLAEGRELLAKQVGLAAVKQAVSALEDQLEVRMMRLEHGLPVEGQTNHMLLVGPPGTGKTTTAEALGKIYAGMGIVRHPEIREVRRSDFCGHYIGESGPKTNELIEKSLGRIIFMDEFYSLIERHQDGTPDMIGMEAVNQLLVQLETHRFDFCFIGAGYEDQVDEFLTVNPGLAGRFNRKLRFESYSPVEIVEIGHRYATPRASQLDDAAREVFLDAVTTIRNYTTPSGQHGIDAMQNGRFARNVIERAEGFRDTRVVAQKRAGQPVSVQDLQIITATDIDAAIRSVCSDNRDMAAIVW.

Gly373–Thr380 contributes to the ATP binding site.

Belongs to the CbxX/CfxQ family. As to quaternary structure, part of the ESX-2 / type VII secretion system (T7SS), which is composed of cytosolic and membrane components. Residues 522-619 interact with an artificial EsxB-EsxA heterodimer from the adjacent ESX-1 locus.

Its subcellular location is the cytoplasm. In terms of biological role, shows ATPase activity. Could provide energy for export of ESX-2 substrates. The chain is ESX-2 secretion system protein EccA2 (eccA2) from Mycobacterium tuberculosis (strain ATCC 25618 / H37Rv).